The following is a 584-amino-acid chain: MDLMNGQSSSVNIAATASEKSSSSESLSDKGSAELKKSFDAVVFDVLKVTPEEYAGQITLMDVPVFKAIQPEELASCGWNKKEKYSSAPNAVAFTRRFNHVSFWVVREILHAQTLKIRAEVLSHYIKTAKKLYELNNLHALMAVVSGLQSAPIFRLTKTWALLSRKDKATFEKLEYVMSKEDNYKRLRDYISSLKMTPCIPYLGIYLSDLTYIDSAYPSTGSILESEQRTNLMNNILRIISDLQQSCEYDIPLLPHVQKYLNSVQYIEELQKFVEDDNYKLSLKIEPGTSTPHSAASREDLVASEVGASPQSGRKNAAAEGALLPPTPPSPRNLIPHGHRKCHSLGYNFIHKMNTAEFKSATFPNAGPRHLLDDSVMEPHVPSRGQAESSTLSSGISIGSSDGSELSEETSWPAFERNRLYHSLGPGTRVSRNGYRGHMKASSSLESEDLAVHLYPGAVTIQGVLRRKTLLKEGKKPTVASWTKYWVALCGTQLFYYAAKSLKATERKHFKSTPSKNVSVVGWMVMMADDPEHPDLFLLTDSEKGNSYKFQAGNRMNAMLWFKHLSAACQSNRQQVPANLMTFE.

A compositionally biased stretch (polar residues) spans Met1–Ile13. Disordered stretches follow at residues Met1–Asp29, Ile285–Gly338, and His380–Ser407. A compositionally biased stretch (low complexity) spans Ala14 to Ser26. Residues Thr50–Gly288 enclose the Ras-GEF domain. Positions Pro326 to Pro329 match the PXXP motif. Over residues Glu388–Ser404 the composition is skewed to low complexity. The 113-residue stretch at Ala458–Gln570 folds into the PH domain.

It is found in the cytoplasm. It localises to the cell membrane. Its function is as follows. Guanine nucleotide exchange factor. May be involved in cytoskeletal organization. This Gallus gallus (Chicken) protein is Ras-specific guanine nucleotide-releasing factor RalGPS1 (RALGPS1).